We begin with the raw amino-acid sequence, 174 residues long: uncharacterized protein (174 aa).

The next 2 helical transmembrane spans lie at 8–28 (FLFIVVFLFHGFMFSVVNYVF) and 146–166 (IVSWILYVFLLATLFLSIQFI).

The protein localises to the cell membrane. This is an uncharacterized protein from Haemophilus influenzae (strain ATCC 51907 / DSM 11121 / KW20 / Rd).